The primary structure comprises 385 residues: Probable caffeine synthase 4 (385 aa).

Tyr-18, Cys-62, Asn-67, Asp-101, Leu-102, Ser-140, and Phe-141 together coordinate S-adenosyl-L-homocysteine. Positions 158, 161, and 162 each coordinate caffeine. Residue Asn-179 coordinates Mg(2+). Residue Thr-238 coordinates caffeine. Residues Asp-261, Phe-263, and Asn-264 each coordinate Mg(2+). Tyr-369 is a caffeine binding site.

This sequence belongs to the methyltransferase superfamily. Type-7 methyltransferase family. Mg(2+) is required as a cofactor. As to expression, expressed in roots, stems, young and old leaves.

It functions in the pathway alkaloid biosynthesis. May be involved in the biosynthesis of caffeine. This is Probable caffeine synthase 4 from Coffea arabica (Arabian coffee).